The primary structure comprises 332 residues: Isopentenyl-diphosphate delta-isomerase (332 aa).

6-7 (RK) is a binding site for substrate. FMN contacts are provided by residues 65-67 (AMT), serine 95, and asparagine 123. Substrate is bound at residue 95-97 (SGR). Glutamine 157 provides a ligand contact to substrate. Mg(2+) is bound at residue glutamate 158. FMN is bound by residues lysine 187, threonine 217, 264–266 (GVY), alanine 285, and 285–286 (AR).

Belongs to the IPP isomerase type 2 family. In terms of assembly, homooctamer. Dimer of tetramers. FMN is required as a cofactor. It depends on NADPH as a cofactor. The cofactor is Mg(2+).

The protein resides in the cytoplasm. The enzyme catalyses isopentenyl diphosphate = dimethylallyl diphosphate. Competitively inhibited by N,N-dimethyl-2-amino-1-ethyl diphosphate (NIPP) and isopentyl diphosphate. Functionally, involved in the biosynthesis of isoprenoids. Catalyzes the 1,3-allylic rearrangement of the homoallylic substrate isopentenyl (IPP) to its allylic isomer, dimethylallyl diphosphate (DMAPP). The polypeptide is Isopentenyl-diphosphate delta-isomerase (Thermus thermophilus (strain ATCC BAA-163 / DSM 7039 / HB27)).